Reading from the N-terminus, the 470-residue chain is Siroheme synthase (470 aa).

Residues 1-213 (MSDATDPGWF…GEHAAARQVL (213 aa)) are precorrin-2 dehydrogenase /sirohydrochlorin ferrochelatase. Residues 28–29 (GI) and 49–50 (PR) each bind NAD(+). Positions 224-470 (GEVWLVGAGP…VVTPPPLSGT (247 aa)) are uroporphyrinogen-III C-methyltransferase. P233 is an S-adenosyl-L-methionine binding site. Catalysis depends on D256, which acts as the Proton acceptor. K278 serves as the catalytic Proton donor. Residues 309-311 (GGD), I314, 339-340 (TA), M392, and G421 each bind S-adenosyl-L-methionine.

It in the N-terminal section; belongs to the precorrin-2 dehydrogenase / sirohydrochlorin ferrochelatase family. This sequence in the C-terminal section; belongs to the precorrin methyltransferase family.

The catalysed reaction is uroporphyrinogen III + 2 S-adenosyl-L-methionine = precorrin-2 + 2 S-adenosyl-L-homocysteine + H(+). The enzyme catalyses precorrin-2 + NAD(+) = sirohydrochlorin + NADH + 2 H(+). It catalyses the reaction siroheme + 2 H(+) = sirohydrochlorin + Fe(2+). It participates in cofactor biosynthesis; adenosylcobalamin biosynthesis; precorrin-2 from uroporphyrinogen III: step 1/1. The protein operates within cofactor biosynthesis; adenosylcobalamin biosynthesis; sirohydrochlorin from precorrin-2: step 1/1. It functions in the pathway porphyrin-containing compound metabolism; siroheme biosynthesis; precorrin-2 from uroporphyrinogen III: step 1/1. Its pathway is porphyrin-containing compound metabolism; siroheme biosynthesis; siroheme from sirohydrochlorin: step 1/1. It participates in porphyrin-containing compound metabolism; siroheme biosynthesis; sirohydrochlorin from precorrin-2: step 1/1. In terms of biological role, multifunctional enzyme that catalyzes the SAM-dependent methylations of uroporphyrinogen III at position C-2 and C-7 to form precorrin-2 via precorrin-1. Then it catalyzes the NAD-dependent ring dehydrogenation of precorrin-2 to yield sirohydrochlorin. Finally, it catalyzes the ferrochelation of sirohydrochlorin to yield siroheme. The protein is Siroheme synthase of Gluconacetobacter diazotrophicus (strain ATCC 49037 / DSM 5601 / CCUG 37298 / CIP 103539 / LMG 7603 / PAl5).